The primary structure comprises 545 residues: Chaperonin GroEL (545 aa).

ATP-binding positions include 29-32 (TLGP), 86-90 (DGTTT), glycine 413, 476-478 (NAA), and aspartate 492.

It belongs to the chaperonin (HSP60) family. Forms a cylinder of 14 subunits composed of two heptameric rings stacked back-to-back. Interacts with the co-chaperonin GroES.

It localises to the cytoplasm. The catalysed reaction is ATP + H2O + a folded polypeptide = ADP + phosphate + an unfolded polypeptide.. Functionally, together with its co-chaperonin GroES, plays an essential role in assisting protein folding. The GroEL-GroES system forms a nano-cage that allows encapsulation of the non-native substrate proteins and provides a physical environment optimized to promote and accelerate protein folding. The sequence is that of Chaperonin GroEL from Oceanobacillus iheyensis (strain DSM 14371 / CIP 107618 / JCM 11309 / KCTC 3954 / HTE831).